The chain runs to 194 residues: Thiol:disulfide interchange protein CycY (194 aa).

A signal peptide spans 1 to 37 (MSEQSTSANPQRRTFLMVLPLIAFIGLALLFWFRLGS). The 145-residue stretch at 46–190 (ALIGRPAPQT…LRSVLLPQME (145 aa)) folds into the Thioredoxin domain. C92 and C95 are disulfide-bonded.

This sequence belongs to the thioredoxin family. DsbE subfamily.

It is found in the periplasm. Its function is as follows. Required for disulfide bond formation in some periplasmic proteins. Also acts as a disulfide oxidoreductase in cytochromes c biogenesis. The cysteines of apocytochromes c must be in the reduced state for covalent linkage between the two moieties to occur. This chain is Thiol:disulfide interchange protein CycY (cycY), found in Bradyrhizobium diazoefficiens (strain JCM 10833 / BCRC 13528 / IAM 13628 / NBRC 14792 / USDA 110).